The sequence spans 292 residues: Probable xyloglucan endotransglucosylase/hydrolase protein 6 (292 aa).

The N-terminal stretch at 1–30 (MAKIYSPSFPGTLCLCIFTLLTLMFIRVSA) is a signal peptide. The GH16 domain occupies 31-224 (RPATFVEDFK…WSKAPFYAYY (194 aa)). Residue glutamate 110 is the Nucleophile of the active site. The active-site Proton donor is the glutamate 114. Glutamate 114 lines the xyloglucan pocket. Asparagine 118 carries N-linked (GlcNAc...) asparagine glycosylation. Xyloglucan is bound by residues 127–129 (QTN), 137–139 (DRE), 203–204 (DW), and glycine 208. 2 disulfides stabilise this stretch: cysteine 232/cysteine 240 and cysteine 277/cysteine 290. Arginine 282 is a binding site for xyloglucan.

This sequence belongs to the glycosyl hydrolase 16 family. XTH group 1 subfamily. Contains at least one intrachain disulfide bond essential for its enzymatic activity.

It is found in the secreted. Its subcellular location is the cell wall. The protein resides in the extracellular space. It localises to the apoplast. The catalysed reaction is breaks a beta-(1-&gt;4) bond in the backbone of a xyloglucan and transfers the xyloglucanyl segment on to O-4 of the non-reducing terminal glucose residue of an acceptor, which can be a xyloglucan or an oligosaccharide of xyloglucan.. Its function is as follows. Catalyzes xyloglucan endohydrolysis (XEH) and/or endotransglycosylation (XET). Cleaves and religates xyloglucan polymers, an essential constituent of the primary cell wall, and thereby participates in cell wall construction of growing tissues. This chain is Probable xyloglucan endotransglucosylase/hydrolase protein 6 (XTH6), found in Arabidopsis thaliana (Mouse-ear cress).